The primary structure comprises 130 residues: DNA-directed RNA polymerase subunit omega (130 aa).

2 disordered regions span residues 80-99 (PEPD…DADD) and 110-130 (EELL…EEDE). Residues 110-124 (EELLKGLEGLAPREE) show a composition bias toward basic and acidic residues.

The protein belongs to the RNA polymerase subunit omega family. As to quaternary structure, the RNAP catalytic core consists of 2 alpha, 1 beta, 1 beta' and 1 omega subunit. When a sigma factor is associated with the core the holoenzyme is formed, which can initiate transcription.

It catalyses the reaction RNA(n) + a ribonucleoside 5'-triphosphate = RNA(n+1) + diphosphate. Functionally, promotes RNA polymerase assembly. Latches the N- and C-terminal regions of the beta' subunit thereby facilitating its interaction with the beta and alpha subunits. The polypeptide is DNA-directed RNA polymerase subunit omega (Nitrobacter hamburgensis (strain DSM 10229 / NCIMB 13809 / X14)).